A 297-amino-acid chain; its full sequence is MVEVRVPATSANIGPGFDCLGVAVNMYNKFFVEEIEEGLIFEGCADKFKNENNLIYVAMKKCFNKIGYKPTGLRIKIESDIPVSRGLGSSAACVVGGIVSANELAGGALNKKELLDLAVEVEGHPDNVNPAFCGGMTASISDNREVIYSKVKVSEGIKFCALIPDFTLSTEKARAVLPKSIDYKDGIFNVGRTALMISALNNGDFHLIKYACKDKLHQDHRAKLIENFYSIKKQCEKLNSLGVFLSGAGPTIMVMLREEDKDFSKNIKSFLETLKNKWEVRELKIDKLGTVVNNRKV.

Residue 82 to 92 (PVSRGLGSSAA) coordinates ATP.

It belongs to the GHMP kinase family. Homoserine kinase subfamily.

It localises to the cytoplasm. It carries out the reaction L-homoserine + ATP = O-phospho-L-homoserine + ADP + H(+). It participates in amino-acid biosynthesis; L-threonine biosynthesis; L-threonine from L-aspartate: step 4/5. Its function is as follows. Catalyzes the ATP-dependent phosphorylation of L-homoserine to L-homoserine phosphate. The polypeptide is Homoserine kinase (Clostridium botulinum (strain Loch Maree / Type A3)).